The sequence spans 453 residues: Cobyrinate a,c-diamide synthase (453 aa).

A GATase cobBQ-type domain is found at 250–440 (RIAVPFDEAF…IHTHTACLPD (191 aa)). Cysteine 332 (nucleophile) is an active-site residue.

This sequence belongs to the CobB/CbiA family. Mg(2+) is required as a cofactor.

The enzyme catalyses cob(II)yrinate + 2 L-glutamine + 2 ATP + 2 H2O = cob(II)yrinate a,c diamide + 2 L-glutamate + 2 ADP + 2 phosphate + 2 H(+). It carries out the reaction Ni-sirohydrochlorin + 2 L-glutamine + 2 ATP + 2 H2O = Ni-sirohydrochlorin a,c-diamide + 2 L-glutamate + 2 ADP + 2 phosphate + 2 H(+). Its pathway is cofactor biosynthesis; adenosylcobalamin biosynthesis; cob(II)yrinate a,c-diamide from sirohydrochlorin (anaerobic route): step 10/10. Its function is as follows. Catalyzes the ATP-dependent amidation of the two carboxylate groups at positions a and c of cobyrinate, using either L-glutamine or ammonia as the nitrogen source. Involved in the biosynthesis of the unique nickel-containing tetrapyrrole coenzyme F430, the prosthetic group of methyl-coenzyme M reductase (MCR), which plays a key role in methanogenesis and anaerobic methane oxidation. Catalyzes the ATP-dependent amidation of the two carboxylate groups at positions a and c of Ni-sirohydrochlorin, using L-glutamine or ammonia as the nitrogen source. This Methanosphaera stadtmanae (strain ATCC 43021 / DSM 3091 / JCM 11832 / MCB-3) protein is Cobyrinate a,c-diamide synthase.